The chain runs to 488 residues: Inosine-5'-monophosphate dehydrogenase (488 aa).

CBS domains are found at residues 95-153 (VISN…SIKI) and 157-216 (MTQE…AKDE). NAD(+)-binding positions include D250 and 300–302 (GIG). Residues G302 and G304 each coordinate K(+). S305 contacts IMP. Residue C307 coordinates K(+). The active-site Thioimidate intermediate is the C307. IMP contacts are provided by residues 340–342 (DGG), 363–364 (GS), and 387–391 (YRGMG). R403 (proton acceptor) is an active-site residue. E417 is an IMP binding site. Positions 468–488 (GLAESHPHNIQITKESPNYSF) are disordered. K(+) is bound by residues E471, S472, and H473. Polar residues predominate over residues 475–488 (HNIQITKESPNYSF).

It belongs to the IMPDH/GMPR family. In terms of assembly, homotetramer. The cofactor is K(+).

It catalyses the reaction IMP + NAD(+) + H2O = XMP + NADH + H(+). The protein operates within purine metabolism; XMP biosynthesis via de novo pathway; XMP from IMP: step 1/1. Its activity is regulated as follows. Mycophenolic acid (MPA) is a non-competitive inhibitor that prevents formation of the closed enzyme conformation by binding to the same site as the amobile flap. In contrast, mizoribine monophosphate (MZP) is a competitive inhibitor that induces the closed conformation. MPA is a potent inhibitor of mammalian IMPDHs but a poor inhibitor of the bacterial enzymes. MZP is a more potent inhibitor of bacterial IMPDH. Catalyzes the conversion of inosine 5'-phosphate (IMP) to xanthosine 5'-phosphate (XMP), the first committed and rate-limiting step in the de novo synthesis of guanine nucleotides, and therefore plays an important role in the regulation of cell growth. The sequence is that of Inosine-5'-monophosphate dehydrogenase from Staphylococcus aureus (strain MW2).